We begin with the raw amino-acid sequence, 95 residues long: Small ribosomal subunit protein bS6 (95 aa).

Belongs to the bacterial ribosomal protein bS6 family.

Its function is as follows. Binds together with bS18 to 16S ribosomal RNA. This Symbiobacterium thermophilum (strain DSM 24528 / JCM 14929 / IAM 14863 / T) protein is Small ribosomal subunit protein bS6.